The chain runs to 382 residues: uncharacterized protein (382 aa).

Topologically, residues 1-7 (MSIYTRP) are cytoplasmic. Residues 8 to 28 (VMLLLCGLLLLTLAIAVLNTL) traverse the membrane as a helical segment. Residues 29–44 (VPLWLAQANLPTWQVG) are Periplasmic-facing. The helical transmembrane segment at 45 to 65 (MVSSSYFTGNLVGTLFTGYLI) threads the bilayer. The Cytoplasmic portion of the chain corresponds to 66 to 74 (KRIGFNRSY). Residues 75–95 (YLASLIFAAGCVGLGVMVGFW) form a helical membrane-spanning segment. Topologically, residues 96–101 (SWMSWR) are periplasmic. Residues 102–122 (FIAGIGCAMIWVVVESALMCS) form a helical membrane-spanning segment. At 123–130 (GTSHNRGR) the chain is on the cytoplasmic side. Residues 131–151 (LLAAYMMVYYMGTFLGQLLVS) traverse the membrane as a helical segment. Residues 152 to 156 (KVSGE) are Periplasmic-facing. Residues 157–177 (LLHVLPWVTGMILAGILPLLF) form a helical membrane-spanning segment. The Cytoplasmic portion of the chain corresponds to 178–203 (TRIVNQQTQARHSSSISAMLKLRQAR). The helical transmembrane segment at 204–224 (LGVNGCIISGIVLGSLYGLMP) threads the bilayer. The Periplasmic portion of the chain corresponds to 225-230 (LYLKHQ). A helical transmembrane segment spans residues 231 to 251 (GMANASIGFWMAVLVSAGILG). Over 252 to 269 (QWPMGRLADKFGRLLVLR) the chain is Cytoplasmic. Helical transmembrane passes span 270–290 (VQVF…AMAP) and 291–311 (ALFI…AWAC). Topologically, residues 312 to 324 (EKVEHHQLVAMNQ) are cytoplasmic. The helical transmembrane segment at 325-345 (ALLLSYTVGSLLGPSFAAMLM) threads the bilayer. Residues 346–348 (QNY) are Periplasmic-facing. Residues 349 to 369 (SDNLLFIMIASVSFIYLLMLL) traverse the membrane as a helical segment. Residues 370–382 (RNVGQTPNPVAHI) lie on the Cytoplasmic side of the membrane.

It belongs to the major facilitator superfamily. YcaD (TC 2.A.1.26) family.

Its subcellular location is the cell inner membrane. This is an uncharacterized protein from Salmonella typhi.